Reading from the N-terminus, the 49-residue chain is GSCIESGKSCTHSRSMKNGLCCPKSRCNCRQIQHRHDYLGKRKYSCRCS.

4 disulfides stabilise this stretch: cysteine 3/cysteine 22, cysteine 10/cysteine 27, cysteine 21/cysteine 48, and cysteine 29/cysteine 46.

Expressed by the venom gland.

The protein localises to the secreted. Its function is as follows. Potent and selective blocker of N-type voltage-gated calcium channels (Cav2.2/CACNA1B). Also blocks vertebrate Cav2.1/CACNA1A (P/Q-type) and Cav1.2/CACNA1C (L-type) channels at very high concentration (2 micromolar). The chain is Omega-segestritoxin-Sf1a from Segestria florentina (Tube-web spider).